A 48-amino-acid chain; its full sequence is Thiamine thiazole synthase, chloroplastic (48 aa).

Residues A18 and V40 each coordinate substrate.

This sequence belongs to the THI4 family. Homooctamer. The cofactor is Fe cation.

Its subcellular location is the plastid. It localises to the chloroplast. It catalyses the reaction [ADP-thiazole synthase]-L-cysteine + glycine + NAD(+) = [ADP-thiazole synthase]-dehydroalanine + ADP-5-ethyl-4-methylthiazole-2-carboxylate + nicotinamide + 3 H2O + 2 H(+). Its function is as follows. Involved in biosynthesis of the thiamine precursor thiazole. Catalyzes the conversion of NAD and glycine to adenosine diphosphate 5-(2-hydroxyethyl)-4-methylthiazole-2-carboxylic acid (ADT), an adenylated thiazole intermediate. The reaction includes an iron-dependent sulfide transfer from a conserved cysteine residue of the protein to a thiazole intermediate. The enzyme can only undergo a single turnover, which suggests it is a suicide enzyme. May have additional roles in adaptation to various stress conditions and in DNA damage tolerance. The polypeptide is Thiamine thiazole synthase, chloroplastic (THI1) (Populus euphratica (Euphrates poplar)).